The primary structure comprises 423 residues: Gamma-glutamyl phosphate reductase (423 aa).

This sequence belongs to the gamma-glutamyl phosphate reductase family.

It is found in the cytoplasm. It catalyses the reaction L-glutamate 5-semialdehyde + phosphate + NADP(+) = L-glutamyl 5-phosphate + NADPH + H(+). Its pathway is amino-acid biosynthesis; L-proline biosynthesis; L-glutamate 5-semialdehyde from L-glutamate: step 2/2. In terms of biological role, catalyzes the NADPH-dependent reduction of L-glutamate 5-phosphate into L-glutamate 5-semialdehyde and phosphate. The product spontaneously undergoes cyclization to form 1-pyrroline-5-carboxylate. The sequence is that of Gamma-glutamyl phosphate reductase from Paramagnetospirillum magneticum (strain ATCC 700264 / AMB-1) (Magnetospirillum magneticum).